Here is a 272-residue protein sequence, read N- to C-terminus: Putative pyruvate, phosphate dikinase regulatory protein 2 (272 aa).

154-161 (GVSRTSKT) contacts ADP.

Belongs to the pyruvate, phosphate/water dikinase regulatory protein family. PDRP subfamily.

The catalysed reaction is N(tele)-phospho-L-histidyl/L-threonyl-[pyruvate, phosphate dikinase] + ADP = N(tele)-phospho-L-histidyl/O-phospho-L-threonyl-[pyruvate, phosphate dikinase] + AMP + H(+). It carries out the reaction N(tele)-phospho-L-histidyl/O-phospho-L-threonyl-[pyruvate, phosphate dikinase] + phosphate + H(+) = N(tele)-phospho-L-histidyl/L-threonyl-[pyruvate, phosphate dikinase] + diphosphate. Bifunctional serine/threonine kinase and phosphorylase involved in the regulation of the pyruvate, phosphate dikinase (PPDK) by catalyzing its phosphorylation/dephosphorylation. The polypeptide is Putative pyruvate, phosphate dikinase regulatory protein 2 (Staphylococcus epidermidis (strain ATCC 35984 / DSM 28319 / BCRC 17069 / CCUG 31568 / BM 3577 / RP62A)).